Reading from the N-terminus, the 321-residue chain is MDKKITIAQIKEVAQQAYDLYKTNTDGKNADYIPYLANINKNLFGISICLLNGQTIEVGDSEYRFGIESVSKVHTAILVLRQYGAKELLEKIGADATGLPFNSIIAILLENDHPSTPLVNAGAITACSMVKPVGDSKQKWDAIVANITDLCGSAPQLIDELYKSESATNFNNRSIAWLLKNYNRIYDDPDMSLDLYTRQCSLGITAKQLSVAAATVANLGLNPVTKKQVFDAELSPKITSMISTVGFYEHTGDWLYTSGIPAKTGVGGGVMGVLPGQFGISAFAPPIDQAGNSVKAQLAIKYVMNKLGLNVFNGHRVTIVD.

7 residues coordinate substrate: Ser69, Asn120, Glu165, Asn172, Tyr196, Tyr248, and Val266.

Belongs to the glutaminase family. Homotetramer.

It catalyses the reaction L-glutamine + H2O = L-glutamate + NH4(+). This Parabacteroides distasonis (strain ATCC 8503 / DSM 20701 / CIP 104284 / JCM 5825 / NCTC 11152) protein is Glutaminase.